Reading from the N-terminus, the 557-residue chain is Urocanate hydratase (557 aa).

NAD(+)-binding positions include 48-49, Q126, 178-180, D198, R203, 244-245, 265-269, 274-275, and Y323; these read GG, GMG, NA, QTSAH, and YL. C411 is a catalytic residue. G493 is a binding site for NAD(+).

Belongs to the urocanase family. Requires NAD(+) as cofactor.

Its subcellular location is the cytoplasm. The catalysed reaction is 4-imidazolone-5-propanoate = trans-urocanate + H2O. It functions in the pathway amino-acid degradation; L-histidine degradation into L-glutamate; N-formimidoyl-L-glutamate from L-histidine: step 2/3. Its function is as follows. Catalyzes the conversion of urocanate to 4-imidazolone-5-propionate. The polypeptide is Urocanate hydratase (Beutenbergia cavernae (strain ATCC BAA-8 / DSM 12333 / CCUG 43141 / JCM 11478 / NBRC 16432 / NCIMB 13614 / HKI 0122)).